We begin with the raw amino-acid sequence, 622 residues long: Cilia- and flagella-associated protein 206 (622 aa).

The disordered stretch occupies residues 570-592 (SQVYPPKDTSTQSMREDSTGVPR).

It belongs to the CFAP206 family.

It localises to the cytoplasm. The protein resides in the cytoskeleton. It is found in the cilium axoneme. Its subcellular location is the cilium basal body. Its function is as follows. Essential for sperm motility and is involved in the regulation of the beating frequency of motile cilia on the epithelial cells of the respiratory tract. Required for the establishment of radial spokes in sperm flagella. The protein is Cilia- and flagella-associated protein 206 of Homo sapiens (Human).